Consider the following 133-residue polypeptide: Ribosome-binding factor A (133 aa).

The protein belongs to the RbfA family. As to quaternary structure, monomer. Binds 30S ribosomal subunits, but not 50S ribosomal subunits or 70S ribosomes.

It is found in the cytoplasm. In terms of biological role, one of several proteins that assist in the late maturation steps of the functional core of the 30S ribosomal subunit. Associates with free 30S ribosomal subunits (but not with 30S subunits that are part of 70S ribosomes or polysomes). Required for efficient processing of 16S rRNA. May interact with the 5'-terminal helix region of 16S rRNA. This Chelativorans sp. (strain BNC1) protein is Ribosome-binding factor A.